Reading from the N-terminus, the 100-residue chain is Large ribosomal subunit protein uL23 (100 aa).

This sequence belongs to the universal ribosomal protein uL23 family. As to quaternary structure, part of the 50S ribosomal subunit. Contacts protein L29, and trigger factor when it is bound to the ribosome.

Functionally, one of the early assembly proteins it binds 23S rRNA. One of the proteins that surrounds the polypeptide exit tunnel on the outside of the ribosome. Forms the main docking site for trigger factor binding to the ribosome. The protein is Large ribosomal subunit protein uL23 of Lactobacillus acidophilus (strain ATCC 700396 / NCK56 / N2 / NCFM).